Reading from the N-terminus, the 34-residue chain is Mu-theraphotoxin-Pspp1 (34 aa).

3 disulfide bridges follow: cysteine 2–cysteine 17, cysteine 9–cysteine 22, and cysteine 16–cysteine 29. Phenylalanine 34 carries the phenylalanine amide modification.

This sequence belongs to the neurotoxin 10 (Hwtx-1) family. As to expression, expressed by the venom gland.

It localises to the secreted. Voltage-gated sodium channel inhibitor. It is unclear if it selectively inhibits Nav1.7/SCN9A or shows similar potency on all sodium channels tested. According to Escoubas et al., 2006 and Nicolas et al., 2019, it is selective over Nav1.7/SCN9A (90% inhibition at 1 uM), versus Nav1.4 and Nav1.6 (35% inhibition), and shows a small inhibition on all other sodium channels (except Nav1.8/SCN10A). According to Goncalves et al., 2019, it shows a similar inhibition on almost all sodium channels tested (Nav1.1/SCN1A (IC(50)=280.3 nM), Nav1.2/SCN2A (IC(50)=73.7 nM), Nav1.3/SCN3A (IC(50)=201.5 nM), Nav1.4/SCN4A (IC(50)&gt;2100 nM), Nav1.5/SCN5A (IC(50)=710.6 nM), Nav1.6/SCN8A (IC(50)=491.2 nM), and Nav1.7/SCN9A (IC(50)=254.3-260 nM)), except Nav1.8/SCN10A. The voltage-dependence of steady-state Nav1.7/SCN9A channel activation and inactivation are not affected, suggesting that is does not act as a gating-modifier toxin but rather blocks or impedes ion flux through the channel pore. The toxin effect is partial and poorly reversible. In addition to its inhibition to sodium channels, it also shows a small inhibition on rat Kv3.4/KCNC4 potassium channels (20% inhibition at 1 uM). In vivo, when tested on pain models, it shows analgesic activity. The polypeptide is Mu-theraphotoxin-Pspp1 (Phlogiellus sp. (Tarantula)).